Here is a 548-residue protein sequence, read N- to C-terminus: GLC7-interacting protein 2 (548 aa).

The span at 1 to 23 shows a compositional bias: basic and acidic residues; the sequence is MYIKAEQKPQQFERKNEKLDRNK. Disordered regions lie at residues 1–54 and 118–143; these read MYIK…STEE and VESLNGSTRPPFKIELPPLSPKSTVP. Ser-51 is subject to Phosphoserine. Thr-52 carries the post-translational modification Phosphothreonine. Position 155 is a phosphoserine (Ser-155). The tract at residues 191–212 is disordered; sequence RSKSLPTTPGIRSGNGVQARDG. Phosphoserine occurs at positions 221 and 238. A disordered region spans residues 293 to 346; sequence FAHPAKISNPNNGKGTNNTKLRKSKRFQNLLKNRTDMPPSKSNKKFVNGGGAHE. The CBM21 domain maps to 419–534; it reads HNGNDCNGVA…NNNGNNYKVD (116 aa).

Interacts with phosphatase 1 (GLC7).

The protein is GLC7-interacting protein 2 (GIP2) of Saccharomyces cerevisiae (strain ATCC 204508 / S288c) (Baker's yeast).